The chain runs to 201 residues: Adenylyl-sulfate kinase (201 aa).

35–42 (GLSGSGKS) serves as a coordination point for ATP. S109 (phosphoserine intermediate) is an active-site residue.

Belongs to the APS kinase family.

The enzyme catalyses adenosine 5'-phosphosulfate + ATP = 3'-phosphoadenylyl sulfate + ADP + H(+). It participates in sulfur metabolism; hydrogen sulfide biosynthesis; sulfite from sulfate: step 2/3. Functionally, catalyzes the synthesis of activated sulfate. This is Adenylyl-sulfate kinase from Erwinia tasmaniensis (strain DSM 17950 / CFBP 7177 / CIP 109463 / NCPPB 4357 / Et1/99).